We begin with the raw amino-acid sequence, 201 residues long: Imidazoleglycerol-phosphate dehydratase (201 aa).

Belongs to the imidazoleglycerol-phosphate dehydratase family.

It is found in the cytoplasm. It carries out the reaction D-erythro-1-(imidazol-4-yl)glycerol 3-phosphate = 3-(imidazol-4-yl)-2-oxopropyl phosphate + H2O. Its pathway is amino-acid biosynthesis; L-histidine biosynthesis; L-histidine from 5-phospho-alpha-D-ribose 1-diphosphate: step 6/9. This chain is Imidazoleglycerol-phosphate dehydratase, found in Synechococcus sp. (strain CC9902).